A 176-amino-acid polypeptide reads, in one-letter code: NAD(P)H-quinone oxidoreductase subunit 6, chloroplastic (176 aa).

Helical transmembrane passes span 10–30, 32–52, 61–81, 92–112, and 152–172; these read FLLVFLGSGLILGGLGVVLLP, PIYSAFSLGLVLVCTSLFYIL, AQLLIYVGAINVLIIFAVMFM, LWTVGDGITSMVCISLFISLI, and FFLPFELISIILLVALIGAIA.

This sequence belongs to the complex I subunit 6 family. As to quaternary structure, NDH is composed of at least 16 different subunits, 5 of which are encoded in the nucleus.

The protein localises to the plastid. It is found in the chloroplast thylakoid membrane. The enzyme catalyses a plastoquinone + NADH + (n+1) H(+)(in) = a plastoquinol + NAD(+) + n H(+)(out). It catalyses the reaction a plastoquinone + NADPH + (n+1) H(+)(in) = a plastoquinol + NADP(+) + n H(+)(out). In terms of biological role, NDH shuttles electrons from NAD(P)H:plastoquinone, via FMN and iron-sulfur (Fe-S) centers, to quinones in the photosynthetic chain and possibly in a chloroplast respiratory chain. The immediate electron acceptor for the enzyme in this species is believed to be plastoquinone. Couples the redox reaction to proton translocation, and thus conserves the redox energy in a proton gradient. This Solanum lycopersicum (Tomato) protein is NAD(P)H-quinone oxidoreductase subunit 6, chloroplastic (ndhG).